Here is a 397-residue protein sequence, read N- to C-terminus: Lysophospholipid transporter LplT (397 aa).

The next 11 helical transmembrane spans lie at 16–36 (MLAVICAQFLSAFGDNALLFA), 53–73 (VLQMLFVGAYILFAPFVGQFA), 91–111 (LGAGCICFGVNPFIGYTLVGI), 139–159 (LMESSTIAAILLGSMAGGILA), 164–184 (LAALIVCALVYGGAVVANLWI), 227–247 (LFWGAGVTLRFLLVIWVPVAL), 253–273 (AMPTYLNAMVAVGIVLGAGAA), 281–301 (TVSRCMPAGILIGIAVIAFAV), 305–325 (LLPAFGLLLLLGVFGGFFIVP), 352–372 (NVAMLLMLGLYSLAVSVGVPP), and 373–393 (VAVGIGFGAVFAVAIAALWVW).

Belongs to the major facilitator superfamily. LplT (TC 2.A.1.42) family.

It localises to the cell inner membrane. In terms of biological role, catalyzes the facilitated diffusion of 2-acyl-glycero-3-phosphoethanolamine (2-acyl-GPE) into the cell. This is Lysophospholipid transporter LplT from Klebsiella pneumoniae subsp. pneumoniae (strain ATCC 700721 / MGH 78578).